The sequence spans 711 residues: Protein mono-ADP-ribosyltransferase PARP12 (711 aa).

3 C3H1-type zinc fingers span residues 103–128 (LCKF…HNLK), 164–188 (ICLH…IKLH), and 189–211 (ICQY…HEFT). A disordered region spans residues 247–279 (SALSKVSPSPAGPQGSSERKDSSGPVSPGTPSQ). Position 268 is a phosphoserine (serine 268). 2 consecutive C3H1-type zinc fingers follow at residues 280–307 (EESE…HFHL) and 281–306 (ESEQ…VHFH). 2 consecutive WWE domains span residues 308–371 (PYRW…RLST) and 374–468 (SVTK…KVCR). Cysteine 484 bears the ADP-ribosylcysteine mark. Residues 494–708 (IPDYWDPAAL…IFVALGNLFT (215 aa)) enclose the PARP catalytic domain. ADP-ribosyl aspartic acid is present on residues aspartate 610 and aspartate 621.

It belongs to the ARTD/PARP family. Interacts with PARP11; this interaction plays a key role in zika virus suppression. Interacts with ISG15. In terms of processing, auto-mono-ADP-ribosylated. Post-translationally, phosphorylated by PRKD1.

The protein localises to the nucleus. It is found in the golgi apparatus. It localises to the trans-Golgi network. The protein resides in the cytoplasm. Its subcellular location is the stress granule. The catalysed reaction is L-aspartyl-[protein] + NAD(+) = 4-O-(ADP-D-ribosyl)-L-aspartyl-[protein] + nicotinamide. It catalyses the reaction L-cysteinyl-[protein] + NAD(+) = S-(ADP-D-ribosyl)-L-cysteinyl-[protein] + nicotinamide + H(+). Functionally, mono-ADP-ribosyltransferase that mediates mono-ADP-ribosylation of target proteins. Displays anti-alphavirus activity during IFN-gamma immune activation by directly ADP-ribosylating the alphaviral non-structural proteins nsP3 and nsP4. Acts as a component of the PRKD1-driven regulatory cascade that selectively controls a major branch of the basolateral transport pathway by catalyzing the MARylation of GOLGA1. Acts also as a key regulator of mitochondrial function, protein translation, and inflammation. Inhibits PINK1/Parkin-dependent mitophagy and promotes cartilage degeneration by inhibiting the ubiquitination and SUMOylation of MFN1/2 by upregulating ISG15 and ISGylation. This Mus musculus (Mouse) protein is Protein mono-ADP-ribosyltransferase PARP12.